The following is a 578-amino-acid chain: MEVKGEIYRVSGPVVTAIGLQAKMYDLVKVGNEGLMGEVIQILGPKTIIQVYEETAGIKPGEPCVSTGSSLSVELGPGLLSSIYDGVQRPLHVLLEKMGSFIQRGVSADGLDHKKLWDFKPIVKKGDSVKGGDVIGVVQETVNIEHKIMVPPDISGTISDIKSGNFTVVDTICTLTDGTELQMMQRWPVRRPRPVKAKLTPTRPLVTGMRILDGLFPVAKGGTAAIPGPFGSGKTVTQQSLAKWSDTEIVVYIGCGERGNEMADVLSEFPELEDPQTGRPLMERTVLIANTSNMPVAAREASVYTGITIAEYYRDMGLDVSLMADSTSRWAEAMREISSRLEEMPGEEGYPAYLSARLAEFYERAGVAESLCGETGSITVIGAVSPPGGDFSEPVTQNTLRIVKVFWALDAKLSQRRHFPAINWLNSYSLYKDSLNDWFADNVAPDYVPLRERAMEMLQTESELQEIVQLVGSDALPDDQQLLLEITRMLREIFLQQNAFHPVDAYSPFDQQYKILKAIMKWGDAAMDALKSGVPVTEIIKLESKNVLAKVKYEEKFDESMNAVLAQMDKEFASLRGR.

An ATP-binding site is contributed by 228-235 (GPFGSGKT).

This sequence belongs to the ATPase alpha/beta chains family. In terms of assembly, has multiple subunits with at least A(3), B(3), C, D, E, F, H, I and proteolipid K(x).

It is found in the cell membrane. The catalysed reaction is ATP + H2O + 4 H(+)(in) = ADP + phosphate + 5 H(+)(out). In terms of biological role, produces ATP from ADP in the presence of a proton gradient across the membrane. The archaeal alpha chain is a catalytic subunit. Its function is as follows. Component of the A-type ATP synthase that produces ATP from ADP in the presence of a proton gradient across the membrane. The A chain is the catalytic subunit. The chain is A-type ATP synthase subunit A from Methanosarcina barkeri.